The sequence spans 654 residues: Probable replication restart protein PriA (654 aa).

C367, C370, C376, C379, C395, C398, C407, and C410 together coordinate Zn(2+).

This sequence belongs to the helicase family. PriA subfamily. Component of the replication restart primosome. It depends on Zn(2+) as a cofactor.

Functionally, initiates the restart of stalled replication forks, which reloads the replicative helicase on sites other than the origin of replication. Recognizes and binds to abandoned replication forks and remodels them to uncover a helicase loading site. Promotes assembly of the primosome at these replication forks. The protein is Probable replication restart protein PriA of Mycobacterium tuberculosis (strain CDC 1551 / Oshkosh).